A 155-amino-acid chain; its full sequence is Molybdopterin synthase catalytic subunit 2 (155 aa).

Substrate-binding positions include 101–102, Lys117, and 124–126; these read HR and KKE.

This sequence belongs to the MoaE family. MOCS2B subfamily. As to quaternary structure, heterotetramer; composed of 2 small (MOCS2A) and 2 large (MOCS2B) subunits.

The protein resides in the cytoplasm. It catalyses the reaction 2 [molybdopterin-synthase sulfur-carrier protein]-C-terminal-Gly-aminoethanethioate + cyclic pyranopterin phosphate + H2O = molybdopterin + 2 [molybdopterin-synthase sulfur-carrier protein]-C-terminal Gly-Gly + 2 H(+). It functions in the pathway cofactor biosynthesis; molybdopterin biosynthesis. Catalytic subunit of the molybdopterin synthase complex, a complex that catalyzes the conversion of precursor Z into molybdopterin. Acts by mediating the incorporation of 2 sulfur atoms from thiocarboxylated MOCS2A into precursor Z to generate a dithiolene group. The sequence is that of Molybdopterin synthase catalytic subunit 2 from Aedes aegypti (Yellowfever mosquito).